Reading from the N-terminus, the 79-residue chain is U-scoloptoxin(15)-Sm1a (79 aa).

The signal sequence occupies residues 1-25 (MKMNVVVLSVVVLLLFIANIQQTEA).

This sequence belongs to the scoloptoxin-15 family. Post-translationally, contains 2 disulfide bonds. In terms of tissue distribution, expressed by the venom gland.

It is found in the secreted. The chain is U-scoloptoxin(15)-Sm1a from Scolopendra morsitans (Tanzanian blue ringleg centipede).